The following is a 247-amino-acid chain: 1-(5-phosphoribosyl)-5-[(5-phosphoribosylamino)methylideneamino] imidazole-4-carboxamide isomerase 2 (247 aa).

Glutamate 8 (proton acceptor) is an active-site residue. The active-site Proton donor is aspartate 128.

Belongs to the HisA/HisF family.

The protein localises to the cytoplasm. The enzyme catalyses 1-(5-phospho-beta-D-ribosyl)-5-[(5-phospho-beta-D-ribosylamino)methylideneamino]imidazole-4-carboxamide = 5-[(5-phospho-1-deoxy-D-ribulos-1-ylimino)methylamino]-1-(5-phospho-beta-D-ribosyl)imidazole-4-carboxamide. The protein operates within amino-acid biosynthesis; L-histidine biosynthesis; L-histidine from 5-phospho-alpha-D-ribose 1-diphosphate: step 4/9. The polypeptide is 1-(5-phosphoribosyl)-5-[(5-phosphoribosylamino)methylideneamino] imidazole-4-carboxamide isomerase 2 (Ruegeria pomeroyi (strain ATCC 700808 / DSM 15171 / DSS-3) (Silicibacter pomeroyi)).